The chain runs to 95 residues: Small ribosomal subunit protein bS16 (95 aa).

The protein belongs to the bacterial ribosomal protein bS16 family.

The sequence is that of Small ribosomal subunit protein bS16 from Thermotoga maritima (strain ATCC 43589 / DSM 3109 / JCM 10099 / NBRC 100826 / MSB8).